Here is a 205-residue protein sequence, read N- to C-terminus: Thymidylate kinase (205 aa).

Residue 13–20 (GIDGSGKS) participates in ATP binding.

This sequence belongs to the thymidylate kinase family.

The enzyme catalyses dTMP + ATP = dTDP + ADP. Phosphorylation of dTMP to form dTDP in both de novo and salvage pathways of dTTP synthesis. The chain is Thymidylate kinase from Leptospira borgpetersenii serovar Hardjo-bovis (strain L550).